Consider the following 439-residue polypeptide: Probable aspartic-type endopeptidase AFUA_3G01220 (439 aa).

An N-terminal signal peptide occupies residues 1–20; the sequence is MHFSIGSLFLYLIASASCTA. Positions 31-50 are disordered; sequence RTPFTTSTSKPSAFTNPSTD. Over residues 32–45 the composition is skewed to low complexity; that stretch reads TPFTTSTSKPSAFT. A Peptidase A1 domain is found at 95 to 436; sequence FATSINIGNQ…DVGAAEMRFA (342 aa). A glycan (N-linked (GlcNAc...) asparagine) is linked at Asn103. Asp111 is a catalytic residue. N-linked (GlcNAc...) asparagine glycans are attached at residues Asn149, Asn178, Asn187, Asn253, Asn256, Asn276, and Asn308. The active site involves Asp323. N-linked (GlcNAc...) asparagine glycosylation is found at Asn361 and Asn394.

The protein belongs to the peptidase A1 family.

Its subcellular location is the secreted. Functionally, probable aspartic-type endopeptidase which contributes to virulence. The chain is Probable aspartic-type endopeptidase AFUA_3G01220 from Aspergillus fumigatus (strain ATCC MYA-4609 / CBS 101355 / FGSC A1100 / Af293) (Neosartorya fumigata).